We begin with the raw amino-acid sequence, 682 residues long: Potassium-transporting ATPase ATP-binding subunit (682 aa).

4 consecutive transmembrane segments (helical) span residues 34–54 (PVMF…IAMA), 62–82 (ALFS…ANFA), 219–239 (IALT…TATL), and 254–274 (VLVA…LSAI). Asp-307 acts as the 4-aspartylphosphate intermediate in catalysis. ATP-binding positions include Asp-344, Glu-348, 377–384 (FTAQSRMS), and Lys-395. The Mg(2+) site is built by Asp-518 and Asp-522. Helical transmembrane passes span 588 to 608 (FAII…LNIM), 616 to 636 (AILS…PLAL), and 662 to 682 (LLVP…CGLV).

This sequence belongs to the cation transport ATPase (P-type) (TC 3.A.3) family. Type IA subfamily. As to quaternary structure, the system is composed of three essential subunits: KdpA, KdpB and KdpC.

It localises to the cell inner membrane. The catalysed reaction is K(+)(out) + ATP + H2O = K(+)(in) + ADP + phosphate + H(+). In terms of biological role, part of the high-affinity ATP-driven potassium transport (or Kdp) system, which catalyzes the hydrolysis of ATP coupled with the electrogenic transport of potassium into the cytoplasm. This subunit is responsible for energy coupling to the transport system and for the release of the potassium ions to the cytoplasm. The polypeptide is Potassium-transporting ATPase ATP-binding subunit (Escherichia coli O81 (strain ED1a)).